A 262-amino-acid chain; its full sequence is Sugar fermentation stimulation protein homolog (262 aa).

It belongs to the SfsA family.

The protein is Sugar fermentation stimulation protein homolog of Lawsonia intracellularis (strain PHE/MN1-00).